The chain runs to 180 residues: Cancer/testis antigen 1 (180 aa).

Gly residues-rich tracts occupy residues 1–47 and 55–66; these read MQAE…GPRG and GPGGGAPRGPHG. Residues 1–66 are disordered; the sequence is MQAEGRGTGG…GGGAPRGPHG (66 aa).

Belongs to the CTAG/PCC1 family. In terms of tissue distribution, expressed in testis and ovary and in a wide variety of cancers. Detected in uterine myometrium. Expressed from 18 weeks until birth in human fetal testis. In the adult testis, is strongly expressed in spermatogonia and in primary spermatocytes, but not in post-meiotic cells or in testicular somatic cells (at protein level).

Its subcellular location is the cytoplasm. This Homo sapiens (Human) protein is Cancer/testis antigen 1 (CTAG1A).